The sequence spans 166 residues: NAD(P)H-quinone oxidoreductase subunit I, chloroplastic (166 aa).

4Fe-4S ferredoxin-type domains are found at residues Gly55–Lys84 and Leu95–Glu124. 8 residues coordinate [4Fe-4S] cluster: Cys64, Cys67, Cys70, Cys74, Cys104, Cys107, Cys110, and Cys114.

The protein belongs to the complex I 23 kDa subunit family. As to quaternary structure, NDH is composed of at least 16 different subunits, 5 of which are encoded in the nucleus. It depends on [4Fe-4S] cluster as a cofactor.

It is found in the plastid. It localises to the chloroplast thylakoid membrane. The catalysed reaction is a plastoquinone + NADH + (n+1) H(+)(in) = a plastoquinol + NAD(+) + n H(+)(out). It carries out the reaction a plastoquinone + NADPH + (n+1) H(+)(in) = a plastoquinol + NADP(+) + n H(+)(out). Functionally, NDH shuttles electrons from NAD(P)H:plastoquinone, via FMN and iron-sulfur (Fe-S) centers, to quinones in the photosynthetic chain and possibly in a chloroplast respiratory chain. The immediate electron acceptor for the enzyme in this species is believed to be plastoquinone. Couples the redox reaction to proton translocation, and thus conserves the redox energy in a proton gradient. The polypeptide is NAD(P)H-quinone oxidoreductase subunit I, chloroplastic (Steiractinia sodiroi).